Consider the following 201-residue polypeptide: Thioredoxin reductase-like selenoprotein T (201 aa).

The first 26 residues, 1–26 (MARSSGPLCLLLLGGLVAGILSGASA), serve as a signal peptide directing secretion. A cross-link (cysteinyl-selenocysteine (Cys-Sec)) is located at residues 51–54 (CVSU). Sec-54 is a non-standard amino acid (selenocysteine). Residues 96–116 (VFKLVLIGLIIAGKDPFAFFG) traverse the membrane as a helical segment.

It belongs to the SelWTH family. Selenoprotein T subfamily. Post-translationally, may contain a selenide-sulfide bond between Cys-51 and Sec-54. This bond is speculated to serve as redox-active pair.

Its subcellular location is the endoplasmic reticulum membrane. The enzyme catalyses [thioredoxin]-dithiol + NADP(+) = [thioredoxin]-disulfide + NADPH + H(+). Its function is as follows. Selenoprotein with thioredoxin reductase-like oxidoreductase activity. The chain is Thioredoxin reductase-like selenoprotein T (selenot) from Xenopus tropicalis (Western clawed frog).